A 416-amino-acid polypeptide reads, in one-letter code: Probable glucan 1,3-beta-glucosidase A (416 aa).

The first 22 residues, 1 to 22 (MFVESAKKALLALSLLAASAQA), serve as a signal peptide directing secretion. A glycan (N-linked (GlcNAc...) asparagine) is linked at N183. E210 serves as the catalytic Proton donor. Intrachain disulfides connect C290/C415 and C316/C342. E308 (nucleophile) is an active-site residue.

This sequence belongs to the glycosyl hydrolase 5 (cellulase A) family. As to quaternary structure, monomer. Mn(2+) is required as a cofactor.

It localises to the secreted. The catalysed reaction is Successive hydrolysis of beta-D-glucose units from the non-reducing ends of (1-&gt;3)-beta-D-glucans, releasing alpha-glucose.. Functionally, beta-glucanases participate in the metabolism of beta-glucan, the main structural component of the cell wall. It could also function biosynthetically as a transglycosylase. In Aspergillus niger (strain ATCC MYA-4892 / CBS 513.88 / FGSC A1513), this protein is Probable glucan 1,3-beta-glucosidase A (exgA).